Reading from the N-terminus, the 517-residue chain is Ascochitine biosynthesis cluster MFS transporter (517 aa).

Over residues 1 to 12 (MSPDSRDPEAQR) the composition is skewed to basic and acidic residues. The disordered stretch occupies residues 1–45 (MSPDSRDPEAQRDVGLTKNTSSVNIPLESVKTDKTSNASPIMGPG). Asparagine 19 carries N-linked (GlcNAc...) asparagine glycosylation. The next 12 membrane-spanning stretches (helical) occupy residues 75 to 95 (WVIT…STIF), 111 to 131 (VVMT…PLIW), 141 to 161 (LTPF…VGVA), 172 to 192 (FFIG…LADI), 204 to 224 (VYAA…GFVV), 232 to 252 (WTAW…LVFV), 308 to 328 (ILLL…LFFV), 347 to 367 (ALPL…ILFV), 390 to 410 (LMMV…WTSS), 421 to 441 (AGFP…SFLI), 457 to 475 (LIRS…PMYH), and 485 to 505 (LLGF…YYGP).

Belongs to the major facilitator superfamily. CAR1 family.

It localises to the membrane. Functionally, MFS transporter; part of the gene cluster that mediates the biosynthesis the mycotoxin ascochitine, an o-quinone methide that plays a possible protective role against other microbial competitors in nature and is considered to be important for pathogenicity of legume-associated Didymella species. The chain is Ascochitine biosynthesis cluster MFS transporter from Didymella fabae (Leaf and pod spot disease fungus).